A 116-amino-acid polypeptide reads, in one-letter code: MRWRDRIAVLCFPPGLMLTVAALILFFIHMGVFASDVHNFCVIHNYDHMSFRYTVVLIFSQVISIGWAAMGSLYAEMTGDKFLRCFALTILILNGAMFFNRLCLEFLAINYREERH.

At 1-16 (MRWRDRIAVLCFPPGL) the chain is on the cytoplasmic side. A helical membrane pass occupies residues 17–38 (MLTVAALILFFIHMGVFASDVH). At 39 to 51 (NFCVIHNYDHMSF) the chain is on the extracellular side. A helical membrane pass occupies residues 52–72 (RYTVVLIFSQVISIGWAAMGS). Residues 73–84 (LYAEMTGDKFLR) lie on the Cytoplasmic side of the membrane. A helical membrane pass occupies residues 85–107 (CFALTILILNGAMFFNRLCLEFL). Residues 108-116 (AINYREERH) lie on the Extracellular side of the membrane.

As to quaternary structure, component of the CatSper complex or CatSpermasome composed of the core pore-forming members CATSPER1, CATSPER2, CATSPER3 and CATSPER4 as well as auxiliary members CATSPERB, CATSPERG, CATSPERD, CATSPERE, CATSPERZ, C2CD6/CATSPERT, SLCO6C1, TMEM249, TMEM262 and EFCAB9. HSPA1 may be an additional auxiliary complex member. The core complex members CATSPER1, CATSPER2, CATSPER3 and CATSPER4 form a heterotetrameric channel. The auxiliary CATSPERB, CATSPERG2, CATSPERD and CATSPERE subunits form a pavilion-like structure over the pore which stabilizes the complex through interactions with CATSPER4, CATSPER3, CATSPER1 and CATSPER2 respectively. SLCO6C1 interacts with CATSPERE and TMEM262/CATSPERH interacts with CATSPERB, further stabilizing the complex. C2CD6/CATSPERT interacts at least with CATSPERD and is required for targeting the CatSper complex in the flagellar membrane.

It is found in the cell projection. It localises to the cilium. The protein localises to the flagellum membrane. Functionally, auxiliary component of the CatSper complex, a complex involved in sperm cell hyperactivation. This is Cation channel sperm-associated auxiliary subunit TMEM262 from Mus musculus (Mouse).